Here is a 337-residue protein sequence, read N- to C-terminus: Ketol-acid reductoisomerase (NADP(+)) (337 aa).

One can recognise a KARI N-terminal Rossmann domain in the interval 3-183 (LEMFYDDDAD…GGTRAGVIKT (181 aa)). NADP(+)-binding positions include 26–29 (YGSQ), Lys49, Ser52, Ser54, and 84–87 (DTAQ). His109 is a catalytic residue. An NADP(+)-binding site is contributed by Gly135. Residues 184–329 (TFKDETETDL…KKLRDLMSWV (146 aa)) enclose the KARI C-terminal knotted domain. 4 residues coordinate Mg(2+): Asp192, Glu196, Glu228, and Glu232. Ser253 is a substrate binding site.

This sequence belongs to the ketol-acid reductoisomerase family. It depends on Mg(2+) as a cofactor.

It catalyses the reaction (2R)-2,3-dihydroxy-3-methylbutanoate + NADP(+) = (2S)-2-acetolactate + NADPH + H(+). It carries out the reaction (2R,3R)-2,3-dihydroxy-3-methylpentanoate + NADP(+) = (S)-2-ethyl-2-hydroxy-3-oxobutanoate + NADPH + H(+). It functions in the pathway amino-acid biosynthesis; L-isoleucine biosynthesis; L-isoleucine from 2-oxobutanoate: step 2/4. The protein operates within amino-acid biosynthesis; L-valine biosynthesis; L-valine from pyruvate: step 2/4. Involved in the biosynthesis of branched-chain amino acids (BCAA). Catalyzes an alkyl-migration followed by a ketol-acid reduction of (S)-2-acetolactate (S2AL) to yield (R)-2,3-dihydroxy-isovalerate. In the isomerase reaction, S2AL is rearranged via a Mg-dependent methyl migration to produce 3-hydroxy-3-methyl-2-ketobutyrate (HMKB). In the reductase reaction, this 2-ketoacid undergoes a metal-dependent reduction by NADPH to yield (R)-2,3-dihydroxy-isovalerate. This is Ketol-acid reductoisomerase (NADP(+)) from Mycobacterium bovis (strain BCG / Pasteur 1173P2).